Reading from the N-terminus, the 105-residue chain is Nucleoid-associated protein Dred_0043 (105 aa).

The protein belongs to the YbaB/EbfC family. As to quaternary structure, homodimer.

The protein localises to the cytoplasm. It localises to the nucleoid. Functionally, binds to DNA and alters its conformation. May be involved in regulation of gene expression, nucleoid organization and DNA protection. This Desulforamulus reducens (strain ATCC BAA-1160 / DSM 100696 / MI-1) (Desulfotomaculum reducens) protein is Nucleoid-associated protein Dred_0043.